Here is a 218-residue protein sequence, read N- to C-terminus: Uracil-DNA glycosylase (218 aa).

Asp-68 acts as the Proton acceptor in catalysis.

This sequence belongs to the uracil-DNA glycosylase (UDG) superfamily. UNG family. As to quaternary structure, homodimer. Interacts with protein OPG148. Component of the Uracil-DNA glycosylase(UDG)-OPG148-polymerase complex; OPG148 and UDG form a heterodimeric processivity factor that associates with OPG71 to form the processive polymerase holoenzyme.

The enzyme catalyses Hydrolyzes single-stranded DNA or mismatched double-stranded DNA and polynucleotides, releasing free uracil.. Functionally, plays an essential role in viral replication as a component of the DNA polymerase processivity factor. Excises uracil residues from the DNA which can arise as a result of misincorporation of dUMP residues by DNA polymerase or due to deamination of cytosine. In Variola virus, this protein is Uracil-DNA glycosylase (OPG116).